The sequence spans 53 residues: Cytochrome c-552 (53 aa).

Heme c-binding residues include Cys-19, Cys-22, His-23, and Met-44.

Post-translationally, binds 1 heme c group covalently per subunit.

Its subcellular location is the cell membrane. The chain is Cytochrome c-552 from Schinkia azotoformans (Bacillus azotoformans).